The chain runs to 633 residues: 1-deoxy-D-xylulose-5-phosphate synthase (633 aa).

Residues histidine 74 and 115 to 117 (GHA) contribute to the thiamine diphosphate site. Residue aspartate 146 participates in Mg(2+) binding. Thiamine diphosphate-binding positions include 147-148 (GA), asparagine 175, tyrosine 286, and glutamate 363. Asparagine 175 is a binding site for Mg(2+).

Belongs to the transketolase family. DXPS subfamily. As to quaternary structure, homodimer. Mg(2+) serves as cofactor. Thiamine diphosphate is required as a cofactor.

The enzyme catalyses D-glyceraldehyde 3-phosphate + pyruvate + H(+) = 1-deoxy-D-xylulose 5-phosphate + CO2. It functions in the pathway metabolic intermediate biosynthesis; 1-deoxy-D-xylulose 5-phosphate biosynthesis; 1-deoxy-D-xylulose 5-phosphate from D-glyceraldehyde 3-phosphate and pyruvate: step 1/1. Catalyzes the acyloin condensation reaction between C atoms 2 and 3 of pyruvate and glyceraldehyde 3-phosphate to yield 1-deoxy-D-xylulose-5-phosphate (DXP). The polypeptide is 1-deoxy-D-xylulose-5-phosphate synthase (Dehalococcoides mccartyi (strain ATCC BAA-2100 / JCM 16839 / KCTC 5957 / BAV1)).